Here is a 514-residue protein sequence, read N- to C-terminus: MQQLNPSEISEIIKGRIDKLDVTSQARNEGTVVSVSDGIVRIHGLADVMYGEMIEFPGGVYGMALNLEQDSVGAVVLGAYTTLAEGMSAKCTGRILEVPVGKELLGRVVDALGNPVDGKGPLNNTETDAVEKVAPGVIWRKSVDQPVQTGYKAVDAMIPVGRGQRELIIGDRQIGKTALAIDAIINQKNSGIFCVYVAIGQKQSTIANVVRKLEENGALANTIVVAASASESAALQFLAPYSGCTMGEFFRDRGEDALIVYDDLSKQAVAYRQISLLLRRPPGREAYPGDVFYLHSRLLERASRVSEEYVEKFTNGAVTGKTGSLTALPIIETQAGDVSAFVPTNVISITDGQIFLESAMFNSGIRPAVNAGVSVSRVGGAAQTKIIKKLSGGIRTALAQYRELAAFAQFASDLDEATRKQLEHGQRVTELMKQKQYAPMSIADMALSLYAAERGFLTDVEIAKIGSFEQALIAYFNRDHADLMAKINVKGDFNDEIDAGMKAGIEKFKATQTW.

Gly170–Thr177 is a binding site for ATP.

This sequence belongs to the ATPase alpha/beta chains family. As to quaternary structure, F-type ATPases have 2 components, CF(1) - the catalytic core - and CF(0) - the membrane proton channel. CF(1) has five subunits: alpha(3), beta(3), gamma(1), delta(1), epsilon(1). CF(0) has three main subunits: a(1), b(2) and c(9-12). The alpha and beta chains form an alternating ring which encloses part of the gamma chain. CF(1) is attached to CF(0) by a central stalk formed by the gamma and epsilon chains, while a peripheral stalk is formed by the delta and b chains.

The protein localises to the cell inner membrane. It catalyses the reaction ATP + H2O + 4 H(+)(in) = ADP + phosphate + 5 H(+)(out). Produces ATP from ADP in the presence of a proton gradient across the membrane. The alpha chain is a regulatory subunit. The chain is ATP synthase subunit alpha from Pseudomonas syringae pv. tomato (strain ATCC BAA-871 / DC3000).